The sequence spans 368 residues: Flagellar P-ring protein (368 aa).

The signal sequence occupies residues M1 to A22.

Belongs to the FlgI family. As to quaternary structure, the basal body constitutes a major portion of the flagellar organelle and consists of four rings (L,P,S, and M) mounted on a central rod.

It localises to the periplasm. It is found in the bacterial flagellum basal body. Functionally, assembles around the rod to form the L-ring and probably protects the motor/basal body from shearing forces during rotation. This Bordetella pertussis (strain Tohama I / ATCC BAA-589 / NCTC 13251) protein is Flagellar P-ring protein.